The sequence spans 113 residues: Dynein light chain Tctex-type 1 (113 aa).

N-acetylmethionine is present on M1. Residues 41-113 (QWTTNVLEQT…CIVSTFGLSI (73 aa)) are interaction with GNB1.

Belongs to the dynein light chain Tctex-type family. Homodimer. The cytoplasmic dynein 1 complex consists of two catalytic heavy chains (HCs) and a number of non-catalytic subunits presented by intermediate chains (ICs), light intermediate chains (LICs) and light chains (LCs); the composition seems to vary in respect to the IC, LIC and LC composition. The heavy chain homodimer serves as a scaffold for the probable homodimeric assembly of the respective non-catalytic subunits. The ICs and LICs bind directly to the HC dimer and the LCs assemble on the IC dimer. DYNLT1 and DYNLT3 compete for association with dynein IC (DYNC1I1 or DYNC1I2). Self-associates. Interacts with RHO. Interacts with DYNC1I1 and DYNC1I2. Interacts with DOC2A, DOC2B and SCN10A. Interacts with PVR. Interacts with SVIL isoform 2. Interacts with GNB1; the interaction occurs in presence of guanine nucleotide-binding protein G(T) subunit gamma; the interaction diminishes the association of DYNLT1 with dynein IC (DYNC1I1 or DYNC1I2). Interacts with GNB2, GNB3 and GNB5; the interactions occur in presence of guanine nucleotide-binding protein G(T) subunit gamma. Interacts with ACVR2B and ARHGEF2. Interacts with DNAI4. Interacts with CFAP61. Phosphorylated by BMPR2. The phosphorylation status is proposed to regulate the association with the cytoplasmic dynein complex and may have role in cytoplasmic dynein cargo release. As to expression, high level in testis (germ cell-specific). Expressed in sperm (at protein level). 200-fold lower in liver, brain, heart, spleen, and kidney. Levels in thymus and two embryonal carcinoma cell lines were several-fold higher than this low constitutive level.

It localises to the golgi apparatus. Its subcellular location is the cytoplasm. The protein localises to the cytoskeleton. The protein resides in the spindle. Functionally, acts as one of several non-catalytic accessory components of the cytoplasmic dynein 1 complex that are thought to be involved in linking dynein to cargos and to adapter proteins that regulate dynein function. Cytoplasmic dynein 1 acts as a motor for the intracellular retrograde motility of vesicles and organelles along microtubules. Binds to transport cargos and is involved in apical cargo transport such as rhodopsin-bearing vesicles in polarized epithelia. May also be a accessory component of axonemal dynein. Plays an important role in male germ cell development and function. Candidate for involvement in male sterility. Plays a role in neuronal morphogenesis; the function is independent of cytoplasmic dynein and seems to be coupled to regulation of the actin cytoskeleton by enhancing Rac1 activity. The function in neurogenesis may be regulated by association with a G-protein beta-gamma dimer. May function as a receptor-independent activator of heterotrimeric G-protein signaling; the activation appears to be independent of a nucleotide exchange. Plays a role in regulating neurogenesis; inhibits the genesis of neurons from precursor cells during cortical development presumably by antagonizing ARHGEF2. Unrelated to the role in retrograde microtubule-associated movement may play a role in the dimerization of cytoplasmic proteins/domains such as for ACVR2B. Binds to the cytoplasmic domain of ACVR2B and, in vitro, inhibits ACVR2B signaling. Involved in the regulation of mitotic spindle orientation. The sequence is that of Dynein light chain Tctex-type 1 (Dynlt1) from Mus musculus (Mouse).